The chain runs to 788 residues: ATP-dependent 6-phosphofructokinase, platelet type (788 aa).

Position 1 is an N-acetylmethionine (methionine 1). Positions 1 to 399 (MSDQDSSTSS…NLNTYKRLAI (399 aa)) are N-terminal catalytic PFK domain 1. A phosphoserine mark is found at serine 2, serine 6, serine 12, and serine 21. Residues glycine 34, 97-98 (RC), and 127-130 (GDGS) each bind ATP. Mg(2+) is bound at residue aspartate 128. Phosphoserine is present on serine 142. Substrate contacts are provided by residues 173 to 175 (SID), arginine 210, 217 to 219 (MGR), glutamate 273, arginine 301, and 307 to 310 (HVQR). Aspartate 175 acts as the Proton acceptor in catalysis. Residue serine 386 is modified to Phosphoserine. Position 395 is an N6-acetyllysine (lysine 395). The interval 400-411 (KEPDDKIPKSNC) is interdomain linker. The segment at 412 to 788 (NVAIINVGAP…VHNHGELSAI (377 aa)) is C-terminal regulatory PFK domain 2. Arginine 481 lines the beta-D-fructose 2,6-bisphosphate pocket. Lysine 486 is subject to N6-acetyllysine. Beta-D-fructose 2,6-bisphosphate contacts are provided by residues 538–542 (TVSNN), arginine 576, 583–585 (MGG), and glutamate 639. A glycan (O-linked (GlcNAc) serine) is linked at serine 540. Tyrosine 651 is modified (phosphotyrosine). Residues arginine 665 and 671 to 674 (HMQQ) contribute to the beta-D-fructose 2,6-bisphosphate site. Lysine 688 carries the N6-acetyllysine modification. Residue arginine 744 coordinates beta-D-fructose 2,6-bisphosphate.

Belongs to the phosphofructokinase type A (PFKA) family. ATP-dependent PFK group I subfamily. Eukaryotic two domain clade 'E' sub-subfamily. In terms of assembly, homo- and heterotetramers. Phosphofructokinase (PFK) enzyme functions as a tetramer composed of different combinations of 3 types of subunits, called PFKM (M), PFKL (L) and PFKP (P). The composition of the PFK tetramer differs according to the tissue type it is present in. The kinetic and regulatory properties of the tetrameric enzyme are dependent on the subunit composition, hence can vary across tissues. Interacts with ATG4B; promoting phosphorylation of ATG4B. The cofactor is Mg(2+). Post-translationally, glcNAcylation decreases enzyme activity. Phosphorylation at Ser-386 promotes interaction with ATG4B. As to expression, expressed at high level in neuroendocrine tissues.

The protein localises to the cytoplasm. The catalysed reaction is beta-D-fructose 6-phosphate + ATP = beta-D-fructose 1,6-bisphosphate + ADP + H(+). It functions in the pathway carbohydrate degradation; glycolysis; D-glyceraldehyde 3-phosphate and glycerone phosphate from D-glucose: step 3/4. Allosterically activated by ADP, AMP, or fructose 2,6-bisphosphate, and allosterically inhibited by ATP or citrate. Its function is as follows. Catalyzes the phosphorylation of D-fructose 6-phosphate to fructose 1,6-bisphosphate by ATP, the first committing step of glycolysis. The chain is ATP-dependent 6-phosphofructokinase, platelet type (Pfkp) from Rattus norvegicus (Rat).